A 274-amino-acid chain; its full sequence is NH(3)-dependent NAD(+) synthetase (274 aa).

46 to 53 (GISGGQDS) provides a ligand contact to ATP. Asp-52 is a binding site for Mg(2+). Residue Arg-140 participates in deamido-NAD(+) binding. Residue Thr-160 coordinates ATP. A Mg(2+)-binding site is contributed by Glu-165. 2 residues coordinate deamido-NAD(+): Lys-173 and Asp-180. The ATP site is built by Lys-189 and Thr-211. 260–261 (HK) serves as a coordination point for deamido-NAD(+).

This sequence belongs to the NAD synthetase family. Homodimer.

It catalyses the reaction deamido-NAD(+) + NH4(+) + ATP = AMP + diphosphate + NAD(+) + H(+). It functions in the pathway cofactor biosynthesis; NAD(+) biosynthesis; NAD(+) from deamido-NAD(+) (ammonia route): step 1/1. In terms of biological role, catalyzes the ATP-dependent amidation of deamido-NAD to form NAD. Uses ammonia as a nitrogen source. This Listeria innocua serovar 6a (strain ATCC BAA-680 / CLIP 11262) protein is NH(3)-dependent NAD(+) synthetase.